Reading from the N-terminus, the 182-residue chain is Type-1 fimbrial protein, A chain (182 aa).

Positions 1–23 (MKIKTLAIVVLSALSLSSTAALA) are cleaved as a signal peptide. Cys44 and Cys84 are oxidised to a cystine.

The protein belongs to the fimbrial protein family.

The protein resides in the fimbrium. Fimbriae (also called pili), polar filaments radiating from the surface of the bacterium to a length of 0.5-1.5 micrometers and numbering 100-300 per cell, enable bacteria to colonize the epithelium of specific host organs. The chain is Type-1 fimbrial protein, A chain (fimA) from Escherichia coli (strain K12).